A 463-amino-acid polypeptide reads, in one-letter code: Chromosomal replication initiator protein DnaA (463 aa).

Positions 1-83 (MSTNQIILTD…LQLFQHYNNT (83 aa)) are domain I, interacts with DnaA modulators. Positions 83–124 (TIKSIEIITKELPGTTQTVTELPTKTFADIGSSELNSENIFS) are domain II. The interval 125–343 (TLDVRFTFDN…GALNKVIAHS (219 aa)) is domain III, AAA+ region. The ATP site is built by Gly171, Gly173, Lys174, and Thr175. Residues 344 to 463 (NFTLKEITLE…INLLMKILQN (120 aa)) form a domain IV, binds dsDNA region.

Belongs to the DnaA family. In terms of assembly, oligomerizes as a right-handed, spiral filament on DNA at oriC.

It is found in the cytoplasm. Functionally, plays an essential role in the initiation and regulation of chromosomal replication. ATP-DnaA binds to the origin of replication (oriC) to initiate formation of the DNA replication initiation complex once per cell cycle. Binds the DnaA box (a 9 base pair repeat at the origin) and separates the double-stranded (ds)DNA. Forms a right-handed helical filament on oriC DNA; dsDNA binds to the exterior of the filament while single-stranded (ss)DNA is stabiized in the filament's interior. The ATP-DnaA-oriC complex binds and stabilizes one strand of the AT-rich DNA unwinding element (DUE), permitting loading of DNA polymerase. After initiation quickly degrades to an ADP-DnaA complex that is not apt for DNA replication. Binds acidic phospholipids. In Rickettsia conorii (strain ATCC VR-613 / Malish 7), this protein is Chromosomal replication initiator protein DnaA.